Here is a 332-residue protein sequence, read N- to C-terminus: Tetraacyldisaccharide 4'-kinase (332 aa).

An ATP-binding site is contributed by 58–65 (TVGGSGKT).

It belongs to the LpxK family.

It catalyses the reaction a lipid A disaccharide + ATP = a lipid IVA + ADP + H(+). The protein operates within glycolipid biosynthesis; lipid IV(A) biosynthesis; lipid IV(A) from (3R)-3-hydroxytetradecanoyl-[acyl-carrier-protein] and UDP-N-acetyl-alpha-D-glucosamine: step 6/6. Its function is as follows. Transfers the gamma-phosphate of ATP to the 4'-position of a tetraacyldisaccharide 1-phosphate intermediate (termed DS-1-P) to form tetraacyldisaccharide 1,4'-bis-phosphate (lipid IVA). The sequence is that of Tetraacyldisaccharide 4'-kinase from Shewanella piezotolerans (strain WP3 / JCM 13877).